The following is a 272-amino-acid chain: Hemin import ATP-binding protein HmuV (272 aa).

The 254-residue stretch at 2 to 255 (LNAEHLHVAR…DLIERCYGFR (254 aa)) folds into the ABC transporter domain. 34–41 (GRNGAGKS) is a binding site for ATP.

It belongs to the ABC transporter superfamily. Heme (hemin) importer (TC 3.A.1.14.5) family. As to quaternary structure, the complex is composed of two ATP-binding proteins (HmuV), two transmembrane proteins (HmuU) and a solute-binding protein (HmuT).

The protein localises to the cell inner membrane. Part of the ABC transporter complex HmuTUV involved in hemin import. Responsible for energy coupling to the transport system. In Burkholderia thailandensis (strain ATCC 700388 / DSM 13276 / CCUG 48851 / CIP 106301 / E264), this protein is Hemin import ATP-binding protein HmuV.